Here is a 257-residue protein sequence, read N- to C-terminus: Transmembrane protein C257L (257 aa).

2 consecutive transmembrane segments (helical) span residues 123–143 (LELL…FTAL) and 163–183 (IMIF…YVLV).

The protein belongs to the asfivirus C257R family.

Its subcellular location is the host membrane. It localises to the virion. The sequence is that of Transmembrane protein C257L from African swine fever virus (isolate Pig/Kenya/KEN-50/1950) (ASFV).